We begin with the raw amino-acid sequence, 457 residues long: Glycine receptor subunit alpha-1 (457 aa).

A signal peptide spans 1-28 (MYSFNTLRLYLWETIVFFSLAASKEAEA). Residues 29-250 (ARSASKPMSP…RFHLERQMGY (222 aa)) lie on the Extracellular side of the membrane. Asparagine 66 carries N-linked (GlcNAc...) asparagine glycosylation. Residues arginine 93 and serine 157 each contribute to the glycine site. Cysteines 166 and 180 form a disulfide. Positions 220 and 222 each coordinate Zn(2+). Cysteine 226 and cysteine 237 form a disulfide bridge. 230-235 (YNTGKF) is a binding site for strychnine. Threonine 232 contacts glycine. Histidine 243 serves as a coordination point for Zn(2+). Residues 251 to 272 (YLIQMYIPSLLIVILSWISFWI) traverse the membrane as a helical segment. The Cytoplasmic segment spans residues 273 to 277 (NMDAA). Residues 278 to 298 (PARVGLGITTVLTMTTQSSGS) traverse the membrane as a helical segment. At 299 to 309 (RASLPKVSYVK) the chain is on the extracellular side. Residues 310 to 330 (AIDIWMAVCLLFVFSALLEYA) traverse the membrane as a helical segment. The Cytoplasmic segment spans residues 331-425 (AVNFVSRQHK…FIQRAKKIDK (95 aa)). The interval 391–410 (KGANNSNTTNPPPAPSKSPE) is disordered. The chain crosses the membrane as a helical span at residues 426–446 (ISRIGFPMAFLIFNMFYWIIY). Topologically, residues 447–457 (KIVRREDVHNQ) are extracellular.

This sequence belongs to the ligand-gated ion channel (TC 1.A.9) family. Glycine receptor (TC 1.A.9.3) subfamily. GLRA1 sub-subfamily. Interacts with GLRB to form heteropentameric channels; this is probably the predominant form in vivo. Heteropentamer composed of four GLRA1 subunits and one GLRB subunit. Heteropentamer composed of two GLRA1 and three GLRB. Heteropentamer composed of three GLRA1 and two GLRB. Homopentamer (in vitro). Both homopentamers and heteropentamers form functional ion channels, but their characteristics are subtly different. As to expression, detected on spinal cord neurons (at protein level). Detected in spinal cord.

It localises to the postsynaptic cell membrane. The protein resides in the synapse. Its subcellular location is the perikaryon. It is found in the cell projection. The protein localises to the dendrite. It localises to the cell membrane. It carries out the reaction chloride(in) = chloride(out). Channel opening is triggered by extracellular glycine. Channel characteristics depend on the subunit composition; heteropentameric channels are activated by lower glycine levels and display faster desensitization. Its function is as follows. Subunit of heteromeric glycine-gated chloride channels. Plays an important role in the down-regulation of neuronal excitability. Contributes to the generation of inhibitory postsynaptic currents. Channel activity is potentiated by ethanol. Potentiation of channel activity by intoxicating levels of ethanol contribute to the sedative effects of ethanol. The protein is Glycine receptor subunit alpha-1 (GLRA1) of Bos taurus (Bovine).